Here is a 78-residue protein sequence, read N- to C-terminus: Beta sliding clamp (78 aa).

It belongs to the beta sliding clamp family. Forms a ring-shaped head-to-tail homodimer around DNA which binds and tethers DNA polymerases and other proteins to the DNA. The DNA replisome complex has a single clamp-loading complex (3 tau and 1 each of delta, delta', psi and chi subunits) which binds 3 Pol III cores (1 core on the leading strand and 2 on the lagging strand) each with a beta sliding clamp dimer. Additional proteins in the replisome are other copies of gamma, psi and chi, Ssb, DNA helicase and RNA primase.

The protein resides in the cytoplasm. Its function is as follows. Confers DNA tethering and processivity to DNA polymerases and other proteins. Acts as a clamp, forming a ring around DNA (a reaction catalyzed by the clamp-loading complex) which diffuses in an ATP-independent manner freely and bidirectionally along dsDNA. Initially characterized for its ability to contact the catalytic subunit of DNA polymerase III (Pol III), a complex, multichain enzyme responsible for most of the replicative synthesis in bacteria; Pol III exhibits 3'-5' exonuclease proofreading activity. The beta chain is required for initiation of replication as well as for processivity of DNA replication. The chain is Beta sliding clamp (dnaN) from Serratia marcescens.